We begin with the raw amino-acid sequence, 377 residues long: Queuine tRNA-ribosyltransferase (377 aa).

Asp-93 serves as the catalytic Proton acceptor. Residues 93–97 (DSGGF), Asp-147, Gln-190, and Gly-216 contribute to the substrate site. An RNA binding region spans residues 247–253 (GVGTPDD). Residue Asp-266 is the Nucleophile of the active site. Residues 271–275 (TRAGR) are RNA binding; important for wobble base 34 recognition. The Zn(2+) site is built by Cys-304, Cys-306, Cys-309, and His-335.

It belongs to the queuine tRNA-ribosyltransferase family. Homodimer. Within each dimer, one monomer is responsible for RNA recognition and catalysis, while the other monomer binds to the replacement base PreQ1. Requires Zn(2+) as cofactor.

It catalyses the reaction 7-aminomethyl-7-carbaguanine + guanosine(34) in tRNA = 7-aminomethyl-7-carbaguanosine(34) in tRNA + guanine. The protein operates within tRNA modification; tRNA-queuosine biosynthesis. Functionally, catalyzes the base-exchange of a guanine (G) residue with the queuine precursor 7-aminomethyl-7-deazaguanine (PreQ1) at position 34 (anticodon wobble position) in tRNAs with GU(N) anticodons (tRNA-Asp, -Asn, -His and -Tyr). Catalysis occurs through a double-displacement mechanism. The nucleophile active site attacks the C1' of nucleotide 34 to detach the guanine base from the RNA, forming a covalent enzyme-RNA intermediate. The proton acceptor active site deprotonates the incoming PreQ1, allowing a nucleophilic attack on the C1' of the ribose to form the product. After dissociation, two additional enzymatic reactions on the tRNA convert PreQ1 to queuine (Q), resulting in the hypermodified nucleoside queuosine (7-(((4,5-cis-dihydroxy-2-cyclopenten-1-yl)amino)methyl)-7-deazaguanosine). The sequence is that of Queuine tRNA-ribosyltransferase from Granulibacter bethesdensis (strain ATCC BAA-1260 / CGDNIH1).